Consider the following 257-residue polypeptide: Capsid protein (257 aa).

The Bipartite nuclear localization signal motif lies at 3-20 (KRTGDILISTPVSKVRRK). Residues 40–54 (KRRSWTYRPMYRKPR) carry the Nuclear localization signal motif. The segment at 68-85 (CEGPCKVQSYEQRDDVKH) is a zinc-finger region. Residues 101 to 122 (ITHRVGKRFCIKSIYILGKIWM) carry the Nuclear export signal motif. The Bipartite nuclear localization signal motif lies at 201 to 248 (KRFFKVNTHVVYNHQEQAKYENHTENALLLYMACTHASNPVYATLKIR).

This sequence belongs to the geminiviridae capsid protein family. In terms of assembly, homomultimer. Binds to single-stranded and double-stranded viral DNA. Interacts (via nuclear localization signals) with host importin alpha-1a.

The protein resides in the virion. It localises to the host nucleus. Encapsidates the viral genome into characteristic twinned ('geminate') particles. Binds the genomic viral ssDNA and shuttles it into and out of the cell nucleus. Plays a role in protection of the genome from degradation, virus acquisition and transmission by insect vectors, infectivity, and systemic movement. The CP of monopartite geminiviruses is absolutely essential for virus movement. The chain is Capsid protein from Tomato yellow leaf curl Sardinia virus (isolate Spain-1) (TYLCSV).